Consider the following 522-residue polypeptide: DNA-binding protein Ikaros (522 aa).

Disordered stretches follow at residues 1–48 (MEME…HNNR) and 96–115 (AKVN…YSSA). 4 C2H2-type zinc fingers span residues 125–147 (LKCD…KRSH), 153–175 (FQCT…IKLH), 181–203 (FKCH…LRTH), and 209–232 (HKCA…ERCH). Residues 379-406 (KSASSEKDGSPSHSGQDSTDTESNNEEK) are disordered. 2 consecutive C2H2-type zinc fingers follow at residues 468–490 (YRCE…MGCH) and 496–520 (FECN…RGEH).

This sequence belongs to the Ikaros C2H2-type zinc-finger protein family. In terms of tissue distribution, expression mainly limited to thymus, spleen and pronephros. Very low expression in liver. No expression in testis, brain, eye and muscle.

The protein localises to the nucleus. In terms of biological role, binds and activates the enhancer (delta-A element) of the CD3-delta gene. Functions in the specification and the maturation of the T-lymphocyte. Also interacts with a critical control element in the TDT (terminal deoxynucleotidyltransferase) promoter as well as with the promoters for other genes expressed during early stages of B- and T-cell development. Function is isoform-specific and is modulated by dominant-negative inactive isoforms. This Oncorhynchus mykiss (Rainbow trout) protein is DNA-binding protein Ikaros (ikzf1).